A 187-amino-acid chain; its full sequence is ATP synthase subunit b 2 (187 aa).

A helical transmembrane segment spans residues 32–52 (TTFAAQILWLAIAFGLLYYLM).

Belongs to the ATPase B chain family. F-type ATPases have 2 components, F(1) - the catalytic core - and F(0) - the membrane proton channel. F(1) has five subunits: alpha(3), beta(3), gamma(1), delta(1), epsilon(1). F(0) has three main subunits: a(1), b(2) and c(10-14). The alpha and beta chains form an alternating ring which encloses part of the gamma chain. F(1) is attached to F(0) by a central stalk formed by the gamma and epsilon chains, while a peripheral stalk is formed by the delta and b chains.

The protein resides in the cell inner membrane. Functionally, f(1)F(0) ATP synthase produces ATP from ADP in the presence of a proton or sodium gradient. F-type ATPases consist of two structural domains, F(1) containing the extramembraneous catalytic core and F(0) containing the membrane proton channel, linked together by a central stalk and a peripheral stalk. During catalysis, ATP synthesis in the catalytic domain of F(1) is coupled via a rotary mechanism of the central stalk subunits to proton translocation. Component of the F(0) channel, it forms part of the peripheral stalk, linking F(1) to F(0). The b'-subunit is a diverged and duplicated form of b found in plants and photosynthetic bacteria. The chain is ATP synthase subunit b 2 (atpF2) from Methylobacterium sp. (strain 4-46).